The chain runs to 398 residues: Large ribosomal subunit protein uL3 (398 aa).

Residues 1-10 (MSHRKFEAPR) are compositionally biased toward basic and acidic residues. The interval 1–34 (MSHRKFEAPRHGNLGFRPRKRAARHQGKVKSFPK) is disordered. Positions 17–28 (RPRKRAARHQGK) are enriched in basic residues.

This sequence belongs to the universal ribosomal protein uL3 family.

It is found in the cytoplasm. In terms of biological role, the L3 protein is a component of the large subunit of cytoplasmic ribosomes. The protein is Large ribosomal subunit protein uL3 (rpl3) of Dictyostelium discoideum (Social amoeba).